The primary structure comprises 496 residues: Glycerol kinase (496 aa).

Position 11 (threonine 11) interacts with ADP. Residues threonine 11, serine 12, and serine 13 each contribute to the ATP site. Residue threonine 11 coordinates sn-glycerol 3-phosphate. Residue arginine 15 participates in ADP binding. Arginine 81, glutamate 82, tyrosine 133, and aspartate 242 together coordinate sn-glycerol 3-phosphate. Positions 81, 82, 133, 242, and 243 each coordinate glycerol. 2 residues coordinate ADP: threonine 264 and glycine 307. ATP is bound by residues threonine 264, glycine 307, glutamine 311, and glycine 412. ADP is bound by residues glycine 412 and asparagine 416.

This sequence belongs to the FGGY kinase family.

It catalyses the reaction glycerol + ATP = sn-glycerol 3-phosphate + ADP + H(+). The protein operates within polyol metabolism; glycerol degradation via glycerol kinase pathway; sn-glycerol 3-phosphate from glycerol: step 1/1. Inhibited by fructose 1,6-bisphosphate (FBP). Its function is as follows. Key enzyme in the regulation of glycerol uptake and metabolism. Catalyzes the phosphorylation of glycerol to yield sn-glycerol 3-phosphate. This is Glycerol kinase from Albidiferax ferrireducens (strain ATCC BAA-621 / DSM 15236 / T118) (Rhodoferax ferrireducens).